The primary structure comprises 207 residues: M-zodatoxin-Lt4a (207 aa).

A signal peptide spans 1–22 (MKFSIIALALAVAFVCVAESRS). A propeptide spanning residues 23-43 (EEEGYDVSEEIQAEELEEAER) is cleaved from the precursor. Positions 40 to 43 (EAER) match the Processing quadruplet motif 1 motif. Q61 is subject to Glutamine amide. Residues 63–66 (REDS) carry the Inverted processing quadruplet motif 1 motif. The propeptide occupies 63–71 (REDSEEAGR). The short motif at 68–71 (EAGR) is the Processing quadruplet motif 2 element. The residue at position 89 (Q89) is a Glutamine amide. Positions 91–94 (REDS) match the Inverted processing quadruplet motif 2 motif. Residues 91 to 99 (REDSEEAGR) constitute a propeptide that is removed on maturation. Positions 96 to 99 (EAGR) match the Processing quadruplet motif 3 motif. Glutamine amide is present on Q117. The Inverted processing quadruplet motif 3 signature appears at 119–122 (REDS). A propeptide spanning residues 119–127 (REDSEEAGR) is cleaved from the precursor. The Processing quadruplet motif 4 signature appears at 124 to 127 (EAGR). Glutamine amide is present on Q145. The short motif at 147-150 (REDS) is the Inverted processing quadruplet motif 4 element. A propeptide spanning residues 147-155 (REDSEEAGR) is cleaved from the precursor. A Processing quadruplet motif 5 motif is present at residues 152 to 155 (EAGR). At Q173 the chain carries Glutamine amide. The short motif at 175 to 178 (REDT) is the Inverted processing quadruplet motif 5 element. The propeptide occupies 175–182 (REDTEEAR). A Processing quadruplet motif 6 motif is present at residues 179 to 182 (EEAR). F206 bears the Phenylalanine amide mark.

The protein belongs to the cationic peptide 03 (latarcin) family. 04 subfamily. Cleavage of the propeptide depends on the processing quadruplet motif (PQM) (XXXR, with at least one of X being E) and the inverted PQM (RXXX, with at least one of X being E). As to expression, expressed by the venom gland.

The protein resides in the secreted. In terms of biological role, M-zodatoxin-Lt4a: Has antimicrobial activity against Gram-positive bacteria (A.globiformis VKM Ac-1112 (MIC=0.3 uM), and B.subtilis VKM B-501 (MIC=1.1 uM)), Gram-negative bacteria (E.coli DH5-alpha (MIC=4.5 uM), E.coli MH1 (MIC=3.2 uM), and P.aeruginosa PAO1 (MIC&gt;35 uM)), and yeasts (P.pastoris GS115 (MIC=36 uM), and S.cerevisiae Y190 (MIC=18 uM)). Does not have hemolytic activity against rabbit erythrocytes. Causes paralysis, but is not lethal when injected into insect (M.domestica) larvae. Functionally, shows no antimicrobial activity against Gram-positive bacterium B.subtilis B-501 or Gram-negative bacterium E.coli DH5-alpha at concentrations up to 20 uM. Shows no antimicrobial activity against Gram-positive bacterium B.subtilis B-501 or Gram-negative bacterium E.coli DH5-alpha at concentrations up to 20 uM. Shows no toxicity towards insect (S.carnaria) larvae. The sequence is that of M-zodatoxin-Lt4a from Lachesana tarabaevi (Spider).